We begin with the raw amino-acid sequence, 1191 residues long: WASH complex subunit homolog 5 (1191 aa).

The protein belongs to the strumpellin family. Component of the WASH complex.

It is found in the early endosome. In terms of biological role, acts at least in part as component of the WASH complex which may regulate wash nucleation-promoting factor (NPF) activity and is required for its membrane targeting during endosomal sorting. During embryogenesis, not involved in the wash-dependent developmental migration of hemocytes anteriorly from the tail. This Drosophila melanogaster (Fruit fly) protein is WASH complex subunit homolog 5.